Reading from the N-terminus, the 123-residue chain is PTS system glucitol/sorbitol-specific EIIA component (123 aa).

The 114-residue stretch at 3-116 (VIYQTTITRI…PDDIAPGSVL (114 aa)) folds into the PTS EIIA type-5 domain. Catalysis depends on His43, which acts as the Tele-phosphohistidine intermediate. His43 is subject to Phosphohistidine; by HPr.

Its subcellular location is the cytoplasm. Functionally, the phosphoenolpyruvate-dependent sugar phosphotransferase system (sugar PTS), a major carbohydrate active transport system, catalyzes the phosphorylation of incoming sugar substrates concomitantly with their translocation across the cell membrane. The enzyme II complex composed of SrlA, SrlB and SrlE is involved in glucitol/sorbitol transport. It can also use D-mannitol. In Escherichia coli (strain K12), this protein is PTS system glucitol/sorbitol-specific EIIA component (srlB).